A 280-amino-acid chain; its full sequence is Cytochrome c1 (280 aa).

A signal peptide spans methionine 1–alanine 21. Residues cysteine 55, cysteine 58, histidine 59, and methionine 205 each coordinate heme c. Residues methionine 249–threonine 267 traverse the membrane as a helical segment.

As to quaternary structure, the main subunits of complex b-c1 are: cytochrome b, cytochrome c1 and the Rieske protein. In terms of processing, binds 1 heme c group covalently per subunit.

Its subcellular location is the cell membrane. Component of the ubiquinol-cytochrome c reductase complex (complex III or cytochrome b-c1 complex), which is a respiratory chain that generates an electrochemical potential coupled to ATP synthesis. c1 functions as an electron donor to cytochrome c. This Rhodobacter capsulatus (Rhodopseudomonas capsulata) protein is Cytochrome c1 (petC).